The chain runs to 369 residues: Dual specificity protein phosphatase 1-A (369 aa).

The region spanning 21-138 is the Rhodanese domain; sequence RAHKCLILDC…FSAQCPEFCT (118 aa). Thr-168 is modified (phosphothreonine; by MAPK1). The Tyrosine-protein phosphatase domain occupies 175-316; that stretch reads GPVEILPFLY…LLQFESQVLA (142 aa). Catalysis depends on Cys-260, which acts as the Phosphocysteine intermediate.

It belongs to the protein-tyrosine phosphatase family. Non-receptor class dual specificity subfamily. Post-translationally, phosphorylated by MAPK1/ERK2 at Thr-168 and at one or more serine residues in a progesterone-dependent manner. Phosphorylation reduces its rate of degradation but does not seem to affect phosphatase activity. As to expression, expressed in XIK-2 kidney cells.

The protein localises to the nucleus. The catalysed reaction is O-phospho-L-seryl-[protein] + H2O = L-seryl-[protein] + phosphate. It carries out the reaction O-phospho-L-threonyl-[protein] + H2O = L-threonyl-[protein] + phosphate. It catalyses the reaction O-phospho-L-tyrosyl-[protein] + H2O = L-tyrosyl-[protein] + phosphate. In terms of biological role, dual specificity phosphatase that dephosphorylates MAP kinase MAPK1/ERK2 on both 'Thr-188' and 'Tyr-190', regulating its activity during the meiotic cell cycle. The polypeptide is Dual specificity protein phosphatase 1-A (Xenopus laevis (African clawed frog)).